The sequence spans 117 residues: Multidrug resistance protein EbrB (117 aa).

4 consecutive transmembrane segments (helical) span residues glycine 3–leucine 23, tryptophan 31–leucine 51, alanine 59–phenylalanine 79, and glutamate 81–leucine 101.

This sequence belongs to the drug/metabolite transporter (DMT) superfamily. Small multidrug resistance (SMR) (TC 2.A.7.1) family. EbrA/EbrB subfamily. The efflux pump is composed of EbrA and EbrB.

The protein resides in the cell membrane. In terms of biological role, part of a multidrug efflux pump. Confers resistance to cationic lipophilic dyes such as ethidium bromide, acriflavine, pyronine Y and safranin O. The efflux is probably coupled to an influx of protons. The protein is Multidrug resistance protein EbrB (ebrB) of Bacillus atrophaeus.